We begin with the raw amino-acid sequence, 132 residues long: Mercuric resistance operon regulatory protein (132 aa).

The HTH merR-type domain occupies 2–71 (KFRIGELADK…LNEIDKLLGV (70 aa)). The segment at residues 5–24 (IGELADKCGVNKETIRYYER) is a DNA-binding region (H-T-H motif). Positions 79, 114, and 123 each coordinate Hg(2+).

In terms of assembly, homodimer.

In terms of biological role, mediates the mercuric-dependent induction of mercury resistance operon. In the absence of mercury MerR represses transcription by binding tightly to the mer operator region; when mercury is present the dimeric complex binds a single ion and becomes a potent transcriptional activator, while remaining bound to the mer site. The chain is Mercuric resistance operon regulatory protein (merR1) from Bacillus cereus.